We begin with the raw amino-acid sequence, 541 residues long: Chaperonin GroEL (541 aa).

Residues 30 to 33 (TLGP), K51, 87 to 91 (DGTTT), G415, 479 to 481 (NAA), and D495 each bind ATP.

It belongs to the chaperonin (HSP60) family. Forms a cylinder of 14 subunits composed of two heptameric rings stacked back-to-back. Interacts with the co-chaperonin GroES.

Its subcellular location is the cytoplasm. The catalysed reaction is ATP + H2O + a folded polypeptide = ADP + phosphate + an unfolded polypeptide.. Together with its co-chaperonin GroES, plays an essential role in assisting protein folding. The GroEL-GroES system forms a nano-cage that allows encapsulation of the non-native substrate proteins and provides a physical environment optimized to promote and accelerate protein folding. This is Chaperonin GroEL from Acinetobacter baumannii (strain SDF).